The following is a 329-amino-acid chain: Ketol-acid reductoisomerase (NADP(+)) (329 aa).

Residues 2–182 (TQLFYDTDAD…GGTRAGILET (181 aa)) enclose the KARI N-terminal Rossmann domain. NADP(+)-binding positions include 25 to 28 (YGSQ), Ser-51, Ser-53, and 83 to 86 (DEFQ). His-108 is an active-site residue. Gly-134 is an NADP(+) binding site. The KARI C-terminal knotted domain maps to 183–328 (NFKEETETDL…KGLRSMFSWL (146 aa)). Positions 191, 195, 227, and 231 each coordinate Mg(2+). Ser-252 contributes to the substrate binding site.

The protein belongs to the ketol-acid reductoisomerase family. The cofactor is Mg(2+).

The catalysed reaction is (2R)-2,3-dihydroxy-3-methylbutanoate + NADP(+) = (2S)-2-acetolactate + NADPH + H(+). It carries out the reaction (2R,3R)-2,3-dihydroxy-3-methylpentanoate + NADP(+) = (S)-2-ethyl-2-hydroxy-3-oxobutanoate + NADPH + H(+). It participates in amino-acid biosynthesis; L-isoleucine biosynthesis; L-isoleucine from 2-oxobutanoate: step 2/4. The protein operates within amino-acid biosynthesis; L-valine biosynthesis; L-valine from pyruvate: step 2/4. Involved in the biosynthesis of branched-chain amino acids (BCAA). Catalyzes an alkyl-migration followed by a ketol-acid reduction of (S)-2-acetolactate (S2AL) to yield (R)-2,3-dihydroxy-isovalerate. In the isomerase reaction, S2AL is rearranged via a Mg-dependent methyl migration to produce 3-hydroxy-3-methyl-2-ketobutyrate (HMKB). In the reductase reaction, this 2-ketoacid undergoes a metal-dependent reduction by NADPH to yield (R)-2,3-dihydroxy-isovalerate. The polypeptide is Ketol-acid reductoisomerase (NADP(+)) (Prochlorococcus marinus (strain MIT 9215)).